A 700-amino-acid polypeptide reads, in one-letter code: Serine/threonine-protein kinase WNK1 (700 aa).

Residues 24–281 (GRYNEVLGKG…ARELLDDPFL (258 aa)) form the Protein kinase domain. ATP-binding positions include 104–107 (TELF) and Lys154. Asp171 serves as the catalytic Proton acceptor. The span at 314 to 339 (NYPSNSSSLNRQYSNGNYPSNSSSLN) shows a compositional bias: low complexity. 3 disordered regions span residues 314 to 345 (NYPS…YSNG), 551 to 575 (ESRE…EVLY), and 647 to 666 (ESGE…SVSG). Residues 551–565 (ESRELSSIDSGHNHS) are compositionally biased toward basic and acidic residues. Positions 566–575 (EEEEEEEVLY) are enriched in acidic residues.

This sequence belongs to the protein kinase superfamily. Ser/Thr protein kinase family. WNK subfamily. Autophosphorylated.

It carries out the reaction L-seryl-[protein] + ATP = O-phospho-L-seryl-[protein] + ADP + H(+). The catalysed reaction is L-threonyl-[protein] + ATP = O-phospho-L-threonyl-[protein] + ADP + H(+). Regulates flowering time by modulating the photoperiod pathway. Phosphorylates APRR3. This is Serine/threonine-protein kinase WNK1 (WNK1) from Arabidopsis thaliana (Mouse-ear cress).